Consider the following 296-residue polypeptide: Formylmethanofuran--tetrahydromethanopterin formyltransferase (296 aa).

This sequence belongs to the FTR family. As to quaternary structure, homotetramer composed of two dimers. Dimerization is sufficient for enzyme activity, but tetramerization is required for high thermostability.

It localises to the cytoplasm. It catalyses the reaction N-formylmethanofuran + 5,6,7,8-tetrahydromethanopterin + H(+) = N(5)-formyl-5,6,7,8-tetrahydromethanopterin + methanofuran. Its pathway is one-carbon metabolism; methanogenesis from CO(2); 5,10-methenyl-5,6,7,8-tetrahydromethanopterin from CO(2): step 2/3. With respect to regulation, requires high salt concentrations for activity and thermostability; 1.5-1.8 M KH(2)PO(4) stimulates activity while stabilizing the enzyme. Functionally, catalyzes the reversible transfer of a formyl group from formylmethanofuran (formyl-MFR) to tetrahydromethanopterin (H(4)MPT) to produce 5-formyl tetrahydromethanopterin (5-formyl-H(4)MPT) and methanofuran (MFR). Acts via a ternary-complex mechanism. Uses N-furfurylformamide much less efficiently, does not use N-methylformamide or formamide. Protein overexpressed in E.coli has very similar properties to enzyme purified from M.kandleri. This Methanopyrus kandleri (strain AV19 / DSM 6324 / JCM 9639 / NBRC 100938) protein is Formylmethanofuran--tetrahydromethanopterin formyltransferase.